The chain runs to 377 residues: Probable protein phosphatase 2C 7 (377 aa).

2 disordered regions span residues 1–68 and 80–99; these read MAAH…GKAA and TTVAEATATGPPKGSDEDDE. The segment covering 21-39 has biased composition (low complexity); sequence PPAAEAEAAAAAAAIARAA. Residues 51 to 63 are compositionally biased toward basic residues; that stretch reads GVRHPLKHRRFRA. Residues 80–89 show a composition bias toward low complexity; the sequence is TTVAEATATG. The region spanning 115–361 is the PPM-type phosphatase domain; sequence SCGYSSFRGR…DNITCIVVKF (247 aa). Mn(2+)-binding residues include D151, G152, D313, and D352.

The protein belongs to the PP2C family. Mg(2+) is required as a cofactor. Requires Mn(2+) as cofactor.

It carries out the reaction O-phospho-L-seryl-[protein] + H2O = L-seryl-[protein] + phosphate. The enzyme catalyses O-phospho-L-threonyl-[protein] + H2O = L-threonyl-[protein] + phosphate. The sequence is that of Probable protein phosphatase 2C 7 from Oryza sativa subsp. japonica (Rice).